The following is a 408-amino-acid chain: tRNA-specific 2-thiouridylase MnmA (408 aa).

ATP is bound by residues 38–45 (GMSGGVDS) and methionine 64. An interaction with target base in tRNA region spans residues 124–126 (NPD). Cysteine 129 serves as the catalytic Nucleophile. Cysteine 129 and cysteine 231 are disulfide-bonded. Residue glycine 153 participates in ATP binding. The tract at residues 181–183 (KDQ) is interaction with tRNA. The active-site Cysteine persulfide intermediate is cysteine 231. The interval 348–349 (RY) is interaction with tRNA.

This sequence belongs to the MnmA/TRMU family.

It is found in the cytoplasm. The enzyme catalyses S-sulfanyl-L-cysteinyl-[protein] + uridine(34) in tRNA + AH2 + ATP = 2-thiouridine(34) in tRNA + L-cysteinyl-[protein] + A + AMP + diphosphate + H(+). Catalyzes the 2-thiolation of uridine at the wobble position (U34) of tRNA, leading to the formation of s(2)U34. The polypeptide is tRNA-specific 2-thiouridylase MnmA (Psychrobacter cryohalolentis (strain ATCC BAA-1226 / DSM 17306 / VKM B-2378 / K5)).